A 129-amino-acid chain; its full sequence is Large ribosomal subunit protein bL19 (129 aa).

This sequence belongs to the bacterial ribosomal protein bL19 family.

This protein is located at the 30S-50S ribosomal subunit interface and may play a role in the structure and function of the aminoacyl-tRNA binding site. This chain is Large ribosomal subunit protein bL19, found in Paraburkholderia phytofirmans (strain DSM 17436 / LMG 22146 / PsJN) (Burkholderia phytofirmans).